The following is a 411-amino-acid chain: Putative binding protein BRA0748/BS1330_II0741 (411 aa).

The first 25 residues, 1 to 25 (MLIRKWKAGLLAGLSILALASSADA), serve as a signal peptide directing secretion.

The protein belongs to the bacterial solute-binding protein 1 family. In terms of assembly, the complex is composed of two ATP-binding proteins (BRA0745), two transmembrane proteins (BRA0749) and a solute-binding protein (BRA0748).

Its subcellular location is the periplasm. Functionally, probably part of an ABC transporter complex. The polypeptide is Putative binding protein BRA0748/BS1330_II0741 (Brucella suis biovar 1 (strain 1330)).